The following is a 218-amino-acid chain: Ras-related protein RABA1i (218 aa).

20–27 (GDSGVGKS) is a binding site for GTP. The short motif at 42 to 50 (SRATIGVEF) is the Effector region element. Residues 68 to 72 (DTAGQ), 126 to 129 (NKAD), and 156 to 157 (SA) each bind GTP. Residues cysteine 215 and cysteine 216 are each lipidated (S-geranylgeranyl cysteine).

This sequence belongs to the small GTPase superfamily. Rab family.

The protein localises to the cell membrane. Its function is as follows. Intracellular vesicle trafficking and protein transport. This is Ras-related protein RABA1i (RABA1I) from Arabidopsis thaliana (Mouse-ear cress).